Here is a 631-residue protein sequence, read N- to C-terminus: Extracellular metalloproteinase mep (631 aa).

The signal sequence occupies residues 1-19; it reads MHGLRLVCSIGTLPLVILA. The propeptide occupies 20–241; the sequence is YPAASLHTTS…VHGVVDYVAD (222 aa). Residues asparagine 282, asparagine 332, and asparagine 364 are each glycosylated (N-linked (GlcNAc...) asparagine). Histidine 425 contacts Zn(2+). The active site involves glutamate 426. Histidine 429 serves as a coordination point for Zn(2+). N-linked (GlcNAc...) asparagine glycosylation is found at asparagine 470 and asparagine 505.

It belongs to the peptidase M36 family. Requires Zn(2+) as cofactor.

It localises to the secreted. Secreted metalloproteinase that allows assimilation of proteinaceous substrates. The protein is Extracellular metalloproteinase mep (mep) of Aspergillus niger (strain ATCC MYA-4892 / CBS 513.88 / FGSC A1513).